Here is a 496-residue protein sequence, read N- to C-terminus: Zinc finger and SCAN domain-containing protein 5C (496 aa).

The segment covering 1–19 (MAANCTSSWSLGESCNSPG) has biased composition (polar residues). Positions 1–38 (MAANCTSSWSLGESCNSPGSEPPQSMPSPATQLGNHDS) are disordered. One can recognise an SCAN box domain in the interval 44–126 (HVNFRMFSCP…DLLRNNRRPK (83 aa)). Disordered regions lie at residues 149–188 (EAPASVRDDPRHVSSQRTSSVNQMCPEEGQASQELQTLPR) and 203–347 (PETT…HPSG). Residues 161–171 (VSSQRTSSVNQ) show a composition bias toward polar residues. The span at 210–223 (GDPKALRPKPTLEK) shows a compositional bias: basic and acidic residues. Positions 234–247 (GLTSPEPQLPNSPT) are enriched in polar residues. The segment covering 253 to 263 (KEGKEPQKRAS) has biased composition (basic and acidic residues). 5 C2H2-type zinc fingers span residues 356–378 (FACEVCGKRFKYRGKLAVHTRSH), 384–406 (FQCNLCGKRFMQRIGLQFHQRTH), 412–434 (YTCDICQKQFTQKSYLKCHKRSH), 440–462 (FECKDCKKVFTYKANLKEHQRIH), and 468–490 (HKCSKCPRAFGRPATLRRHQKTH).

The protein localises to the nucleus. Functionally, may be involved in transcriptional regulation. The sequence is that of Zinc finger and SCAN domain-containing protein 5C from Homo sapiens (Human).